The primary structure comprises 386 residues: O-methyltransferase 12 (386 aa).

The S-adenosyl-L-homocysteine site is built by S207, G231, D254, D274, and K288. Residue D254 coordinates S-adenosyl-L-methionine. H292 (proton acceptor) is an active-site residue.

This sequence belongs to the class I-like SAM-binding methyltransferase superfamily. Cation-independent O-methyltransferase family. As to quaternary structure, homodimer. As to expression, expressed at high levels in all tissues.

It carries out the reaction 4-hydroxy-3,5-dimethoxyphenethylamine + S-adenosyl-L-methionine = mescaline + S-adenosyl-L-homocysteine + H(+). It catalyses the reaction dopamine + S-adenosyl-L-methionine = 4-methoxytyramine + S-adenosyl-L-homocysteine + H(+). The protein operates within aromatic compound metabolism. It functions in the pathway alkaloid biosynthesis. Its function is as follows. O-methyltransferase participating in the biosynthesis of natural products derived from phenylethylamine, including mescaline, a natural hallucinogen potentially used in psychotherapeutic treatments. Catalyzes the O-methylation of dopamine, 4-hydroxy-3,5-dimethoxyphenethylamine, 4,5-dihydroxy-3-methoxyphenethylamine and N-methyl-4,5-dihydroxy-3-methoxyphenethylamine. Also involved in the conversion of N-methyl-4-hydroxy-3,5-dimethoxyphenethylamine to N-methylmescaline. In Lophophora williamsii (Peyote), this protein is O-methyltransferase 12.